The chain runs to 47 residues: Accessory gland peptide Acp33A (47 aa).

The N-terminal stretch at 1–21 is a signal peptide; it reads MLPSKRVPFLFTIILFLAGLG.

As to expression, main cells of accessory gland and seminal fluid.

Its subcellular location is the secreted. Its function is as follows. Responsible for physiological and behavioral changes in mated female flies. The sequence is that of Accessory gland peptide Acp33A (Acp33A) from Drosophila melanogaster (Fruit fly).